Here is a 502-residue protein sequence, read N- to C-terminus: Smr domain-containing protein C1235.03 (502 aa).

Positions 150-184 are disordered; it reads LITSNIGHRSRQRKKKTKKATNSRKPLSKFQSNTE. Basic residues predominate over residues 157–171; that stretch reads HRSRQRKKKTKKATN. The Smr domain maps to 411–459; sequence SLDLHGATVREAKTIVRERVAAWWAKEADTSPNSIRPFVIVTGRGNHSI.

The protein resides in the nucleus. Its subcellular location is the nucleolus. This chain is Smr domain-containing protein C1235.03, found in Schizosaccharomyces pombe (strain 972 / ATCC 24843) (Fission yeast).